The sequence spans 545 residues: Probable quinate permease (545 aa).

Topologically, residues 1 to 22 (MSILSLVEDRPTPKEVYNWRIY) are cytoplasmic. Residues 23–43 (LLAAVASFTSCMIGYDSAFIG) traverse the membrane as a helical segment. Residues 44–66 (TTISLQSFKDEFNWDAMSTDKQN) lie on the Extracellular side of the membrane. The chain crosses the membrane as a helical span at residues 67 to 87 (LISANIVSLYQAGAFFGAFFA). Over 88 to 97 (YPMGHFWGRR) the chain is Cytoplasmic. Residues 98-118 (WGLFVAALVFTLGAGLMLGAN) form a helical membrane-spanning segment. Topologically, residues 119-130 (GDRGLGLIYGGR) are extracellular. A helical transmembrane segment spans residues 131–151 (VLAGLGVGAGSNITPIYISEL). Over 152 to 159 (APPAIRGR) the chain is Cytoplasmic. Residues 160-180 (LVGVYELGWQIGGLVGFWICF) form a helical membrane-spanning segment. The Extracellular segment spans residues 181 to 193 (GVDDTLAPSHKQW). A helical transmembrane segment spans residues 194 to 214 (IIPFAVQLIPSGLLLLGILFV). Residues 215–285 (RESPRWLFLR…VWSNKRIMYR (71 aa)) are Cytoplasmic-facing. A helical membrane pass occupies residues 286–306 (LFLGSMLFLWQNGSGINAINY). The Extracellular segment spans residues 307-325 (YSPTVFKSIGLRGANTSLL). The helical transmembrane segment at 326-346 (TTGIFGVVKTVVTFVWLLWLI) threads the bilayer. Over 347–352 (DRLGRR) the chain is Cytoplasmic. The helical transmembrane segment at 353-373 (LLLMIGAAGGSVCLWIVGAYI) threads the bilayer. The Extracellular segment spans residues 374–384 (KVAKPTERDPD). A helical membrane pass occupies residues 385-405 (APLDGGGIAAMFFFYLWTVFY). At 406-457 (TPSWNGTPWVMNSEMFDPNVRSLAQACAAGSNWLWNFLISRFTPQMFAKMEY) the chain is on the cytoplasmic side. The chain crosses the membrane as a helical span at residues 458–478 (GVYFFFASLMILSIVFVFFLI). Over 479–545 (PETKGIPLES…VEQAESVPKA (67 aa)) the chain is Extracellular. The tract at residues 520-545 (IEESGYTKSDAQQVERVEQAESVPKA) is disordered.

This sequence belongs to the major facilitator superfamily. Sugar transporter (TC 2.A.1.1) family. As to quaternary structure, interacts with creB. Post-translationally, ubiquitinated. Deubiquitinated by creB, probably to control its activity or amount.

Its subcellular location is the cell membrane. Integral membrane transporter that imports quinic acid to be catabolized as a carbon source. The polypeptide is Probable quinate permease (qutD) (Aspergillus terreus (strain NIH 2624 / FGSC A1156)).